A 100-amino-acid chain; its full sequence is Urease subunit gamma (100 aa).

Belongs to the urease gamma subunit family. In terms of assembly, heterotrimer of UreA (gamma), UreB (beta) and UreC (alpha) subunits. Three heterotrimers associate to form the active enzyme.

Its subcellular location is the cytoplasm. It catalyses the reaction urea + 2 H2O + H(+) = hydrogencarbonate + 2 NH4(+). The protein operates within nitrogen metabolism; urea degradation; CO(2) and NH(3) from urea (urease route): step 1/1. This is Urease subunit gamma from Rhizobium etli (strain ATCC 51251 / DSM 11541 / JCM 21823 / NBRC 15573 / CFN 42).